A 793-amino-acid chain; its full sequence is Pentatricopeptide repeat-containing protein At1g03100, mitochondrial (793 aa).

The transit peptide at 1–87 directs the protein to the mitochondrion; sequence MFSLRKTKLQ…REAISSISGS (87 aa). PPR repeat units lie at residues 257–291, 292–322, 330–364, 458–492, 495–529, 530–564, 565–599, 601–631, 637–671, 672–707, and 713–747; these read NTQV…GVKA, DANL…IDEA, FWQF…GKVA, TEEI…DSPV, DNSM…GVRT, GSSV…GIQL, DSSC…KILR, GNQK…IREV, GVHD…GHSP, NAQT…AAAT, and DQEL…NMFV.

It belongs to the PPR family. P subfamily.

It is found in the mitochondrion. This chain is Pentatricopeptide repeat-containing protein At1g03100, mitochondrial, found in Arabidopsis thaliana (Mouse-ear cress).